Reading from the N-terminus, the 603-residue chain is MVIYCNLHTVIMNIFYNNIHRCFKDTPLHKAVMLPDAVERIRMFVSKGADINVISDFKKTALHYAAKKLATPEVLKTLIYLGTNVNVTDMFESTPLHYAVQENGLEATKKLLDLGADPNTKYMNGQTPLHCAAMVIPDGPELVRILVEYGANVNALDNKHNTPLALAAELSNTNKTIETLIELGADVKIKNNDGITPLHLAAKSSSDSKTVETLILHGADVNATCSEGNTPLHDAATSYELSNTIEMLIEYGAEVNAANSVGDTPLHCAARSRNPVHKLKTLIAHGSNVNAVNGISVTPLHLATYSDNATEALKVLIEHGAEVNSVDIYGRTPMHYISRSYSSQSLKTAVELLVEHGADIEAKNVIGGTPLSSACNNIEYDLRLIECFIEYGADINTRDIRDETPLYSAIKYPEIVNLLMNYSASTNITNKSNITPLESAIANCIGSAEIIVTQIILDAFRFPDIKNDAIFIRNMKTIEECTMLIDVKESCEYDINKMRSIKFNNMYGLDIFIRSNNINLLSSLVSNVEDIYLEPGCFLVYGNKLRKSVYAARKRLSLLKNSISILSNITTDGYWNALPIELKYNILAMLGDNDLFNIVRNCS.

ANK repeat units lie at residues 23–53 (FKDTPLHKAVMLPDAVERIRMFVSKGADINV), 57–87 (FKKTALHYAAKKLATPEVLKTLIYLGTNVNV), 91–120 (FESTPLHYAVQENGLEATKKLLDLGADPNT), 124–155 (NGQTPLHCAAMVIPDGPELVRILVEYGANVNA), 159–189 (KHNTPLALAAELSNTNKTIETLIELGADVKI), 193–223 (DGITPLHLAAKSSSDSKTVETLILHGADVNA), 227–257 (EGNTPLHDAATSYELSNTIEMLIEYGAEVNA), 261–291 (VGDTPLHCAARSRNPVHKLKTLIAHGSNVNA), 295–325 (ISVTPLHLATYSDNATEALKVLIEHGAEVNS), 329–362 (YGRTPMHYISRSYSSQSLKTAVELLVEHGADIEA), 366–397 (IGGTPLSSACNNIEYDLRLIECFIEYGADINT), 401–428 (RDETPLYSAIKYPEIVNLLMNYSASTNI), 432–467 (SNITPLESAIANCIGSAEIIVTQIILDAFRFPDIKN), and 504–533 (NNMYGLDIFIRSNNINLLSSLVSNVEDIYL).

This is Putative ankyrin repeat protein FPV162 from Vertebrata (FPV).